Reading from the N-terminus, the 483-residue chain is ATP synthase subunit beta, chloroplastic (483 aa).

163–170 (GGAGVGKT) is an ATP binding site.

It belongs to the ATPase alpha/beta chains family. As to quaternary structure, F-type ATPases have 2 components, CF(1) - the catalytic core - and CF(0) - the membrane proton channel. CF(1) has five subunits: alpha(3), beta(3), gamma(1), delta(1), epsilon(1). CF(0) has four main subunits: a(1), b(1), b'(1) and c(9-12).

It localises to the plastid. Its subcellular location is the chloroplast thylakoid membrane. It carries out the reaction ATP + H2O + 4 H(+)(in) = ADP + phosphate + 5 H(+)(out). In terms of biological role, produces ATP from ADP in the presence of a proton gradient across the membrane. The catalytic sites are hosted primarily by the beta subunits. The chain is ATP synthase subunit beta, chloroplastic from Ostreococcus tauri.